A 488-amino-acid polypeptide reads, in one-letter code: Alkaline nuclease (488 aa).

This sequence belongs to the herpesviridae alkaline nuclease family. Interacts with major DNA-binding protein; this interaction increases the nuclease processivity of the alkaline exonuclease.

Its subcellular location is the host nucleus. The protein localises to the host cytoplasm. Its function is as follows. Plays a role in processing non linear or branched viral DNA intermediates in order to promote the production of mature packaged unit-length linear progeny viral DNA molecules. Exhibits endonuclease and exonuclease activities and accepts both double-stranded and single-stranded DNA as substrate. Exonuclease digestion of DNA is in the 5'-&gt; 3' direction and the products are 5'-monophosphate nucleosides. Additionally, forms a recombinase with the major DNA-binding protein, which displays strand exchange activity. The chain is Alkaline nuclease (U70) from Homo sapiens (Human).